The sequence spans 288 residues: Type II iodothyronine deiodinase (288 aa).

Over 1–5 (MPHVN) the chain is Lumenal. Residues 6-26 (LLVVLLILPGVFSNCLFLALY) traverse the membrane as a helical; Signal-anchor for type III membrane protein segment. At 27-288 (DAVSFLRRAL…SFLESVKASR (262 aa)) the chain is on the cytoplasmic side. Positions 99–130 (SCAASSSSSHETPTPRTTAEAAATVTTSTTTT) are disordered. U160 is a catalytic residue. Position 160 (U160) is a non-standard amino acid, selenocysteine.

The protein belongs to the iodothyronine deiodinase family. Predominantly monomer. Can form homodimers but homodimerization is not essential for enzyme activity. Expressed in intestine, liver, kidney and brain of immediately premetamorphic larvae, of larvae in all stages of metamorphosis and of parasitic feeding juveniles. In immediately premetamorphic larvae, levels are significantly higher in intestine and liver than in kidney and brain.

It localises to the endoplasmic reticulum membrane. It catalyses the reaction 3,3',5-triiodo-L-thyronine + iodide + A + H(+) = L-thyroxine + AH2. The catalysed reaction is 3,3'-diiodo-L-thyronine + iodide + A + H(+) = 3,3',5'-triiodo-L-thyronine + AH2. It carries out the reaction 3'-iodo-L-thyronine + iodide + A + H(+) = 3',5'-diiodo-L-thyronine + AH2. The enzyme catalyses 3,3'-diiodothyronamine + iodide + A + H(+) = 3,3',5'-triiodothyronamine + AH2. It catalyses the reaction 3'-iodothyronamine + iodide + A + H(+) = 3',5'-diiodothyronamine + AH2. Its function is as follows. Plays a crucial role in the metabolism of thyroid hormones (TH) and has specific roles in TH activation and inactivation by deiodination. Catalyzes the deiodination of L-thyroxine (T4) to 3,5,3'-triiodothyronine (T3), 3,3',5'-triiodothyronine (rT3) to 3,3'-diiodothyronine (3,3'-T2) and 3',5'-diiodothyronine (3',5'-T2) to 3'-monoiodothyronine (3'-T1) via outer-ring deiodination (ORD). Catalyzes the phenolic ring deiodinations of 3,3',5'-triiodothyronamine and 3',5'- diiodothyronamine. This is Type II iodothyronine deiodinase from Petromyzon marinus (Sea lamprey).